A 366-amino-acid chain; its full sequence is Alanine racemase (366 aa).

Lys-33 acts as the Proton acceptor; specific for D-alanine in catalysis. At Lys-33 the chain carries N6-(pyridoxal phosphate)lysine. Arg-129 contributes to the substrate binding site. Tyr-253 acts as the Proton acceptor; specific for L-alanine in catalysis. Residue Met-301 participates in substrate binding.

Belongs to the alanine racemase family. Pyridoxal 5'-phosphate is required as a cofactor.

It catalyses the reaction L-alanine = D-alanine. Its pathway is amino-acid biosynthesis; D-alanine biosynthesis; D-alanine from L-alanine: step 1/1. Functionally, catalyzes the interconversion of L-alanine and D-alanine. May also act on other amino acids. The protein is Alanine racemase (alr) of Xanthomonas axonopodis pv. citri (strain 306).